A 302-amino-acid chain; its full sequence is Putative S-adenosyl-L-methionine-dependent methyltransferase MRA_0290 (302 aa).

S-adenosyl-L-methionine-binding positions include Asp-126 and 155-156 (DL).

Belongs to the UPF0677 family.

In terms of biological role, exhibits S-adenosyl-L-methionine-dependent methyltransferase activity. The protein is Putative S-adenosyl-L-methionine-dependent methyltransferase MRA_0290 of Mycobacterium tuberculosis (strain ATCC 25177 / H37Ra).